We begin with the raw amino-acid sequence, 213 residues long: Imidazole glycerol phosphate synthase subunit HisH (213 aa).

Residues 1–212 (MLAILDYKAG…HRYCTEAADA (212 aa)) form the Glutamine amidotransferase type-1 domain. Residue cysteine 79 is the Nucleophile of the active site. Active-site residues include histidine 187 and glutamate 189.

Heterodimer of HisH and HisF.

The protein resides in the cytoplasm. The catalysed reaction is 5-[(5-phospho-1-deoxy-D-ribulos-1-ylimino)methylamino]-1-(5-phospho-beta-D-ribosyl)imidazole-4-carboxamide + L-glutamine = D-erythro-1-(imidazol-4-yl)glycerol 3-phosphate + 5-amino-1-(5-phospho-beta-D-ribosyl)imidazole-4-carboxamide + L-glutamate + H(+). It catalyses the reaction L-glutamine + H2O = L-glutamate + NH4(+). It functions in the pathway amino-acid biosynthesis; L-histidine biosynthesis; L-histidine from 5-phospho-alpha-D-ribose 1-diphosphate: step 5/9. Functionally, IGPS catalyzes the conversion of PRFAR and glutamine to IGP, AICAR and glutamate. The HisH subunit catalyzes the hydrolysis of glutamine to glutamate and ammonia as part of the synthesis of IGP and AICAR. The resulting ammonia molecule is channeled to the active site of HisF. This Nitratidesulfovibrio vulgaris (strain ATCC 29579 / DSM 644 / CCUG 34227 / NCIMB 8303 / VKM B-1760 / Hildenborough) (Desulfovibrio vulgaris) protein is Imidazole glycerol phosphate synthase subunit HisH.